The primary structure comprises 223 residues: Ribonuclease 3 (223 aa).

In terms of domain architecture, RNase III spans 3–125; it reads LERLQKKLSY…IIAAIYLDAG (123 aa). E38 contacts Mg(2+). The active site involves D42. D111 and E114 together coordinate Mg(2+). Residue E114 is part of the active site. Positions 152–222 constitute a DRBM domain; that stretch reads DPKTRLQEFL…AEQVLAKLTT (71 aa).

The protein belongs to the ribonuclease III family. As to quaternary structure, homodimer. Mg(2+) is required as a cofactor.

It localises to the cytoplasm. The enzyme catalyses Endonucleolytic cleavage to 5'-phosphomonoester.. Its function is as follows. Digests double-stranded RNA. Involved in the processing of primary rRNA transcript to yield the immediate precursors to the large and small rRNAs (23S and 16S). Processes some mRNAs, and tRNAs when they are encoded in the rRNA operon. Processes pre-crRNA and tracrRNA of type II CRISPR loci if present in the organism. The polypeptide is Ribonuclease 3 (Actinobacillus pleuropneumoniae serotype 5b (strain L20)).